The following is a 110-amino-acid chain: Protein mistic (110 aa).

Residues 1–7 lie on the Cytoplasmic side of the membrane; that stretch reads MFCTFFE. The chain crosses the membrane as a helical span at residues 8 to 22; the sequence is KHHRKWDILLEKSTG. Topologically, residues 23–31 are extracellular; sequence VMEAMKVTS. The helical transmembrane segment at 32–55 threads the bilayer; it reads EEKEQLSTAIDRMNEGLDAFIQLY. The Cytoplasmic portion of the chain corresponds to 56 to 66; it reads NESEIDEPLIQ. Residues 67 to 81 traverse the membrane as a helical segment; it reads LDDDTAELMKQARDM. The Extracellular segment spans residues 82–88; it reads YGQEKLN. The chain crosses the membrane as a helical span at residues 89-102; the sequence is EKLNTIIKQILSIS. At 103-110 the chain is on the cytoplasmic side; it reads VSEEGEKE.

As to quaternary structure, monomer.

The protein resides in the cell membrane. In terms of biological role, chaperone that facilitates the production and integration of integral membrane proteins into the bacterial lipid bilayer. This Bacillus subtilis (strain 168) protein is Protein mistic (mstX).